The primary structure comprises 257 residues: tRNA (guanine-N(1)-)-methyltransferase (257 aa).

S-adenosyl-L-methionine is bound by residues glycine 113 and 133–138; that span reads IGDYVL.

This sequence belongs to the RNA methyltransferase TrmD family. Homodimer.

It localises to the cytoplasm. It catalyses the reaction guanosine(37) in tRNA + S-adenosyl-L-methionine = N(1)-methylguanosine(37) in tRNA + S-adenosyl-L-homocysteine + H(+). Its function is as follows. Specifically methylates guanosine-37 in various tRNAs. This Cronobacter sakazakii (strain ATCC BAA-894) (Enterobacter sakazakii) protein is tRNA (guanine-N(1)-)-methyltransferase.